The primary structure comprises 367 residues: Teichoic acid glycerol-phosphate primase (367 aa).

Belongs to the CDP-glycerol glycerophosphotransferase family.

Its subcellular location is the cell membrane. It carries out the reaction N-acetyl-beta-D-mannosaminyl-(1-&gt;4)-N-acetyl-alpha-D-glucosaminyl di-trans,octa-cis-undecaprenyl diphosphate + CDP-glycerol = 4-O-[(2R)-glycerylphospho]-N-acetyl-beta-D-mannosaminyl-(1-&gt;4)-N-acetyl-alpha-D-glucosaminyl di-trans,octa-cis-undecaprenyl diphosphate + CMP + H(+). The protein operates within cell wall biogenesis; poly(ribitol phosphate) teichoic acid biosynthesis. Catalyzes the addition of a single glycerol phosphate residue to the prenoldiphosphate-linked disaccharide. This is Teichoic acid glycerol-phosphate primase (tarB) from Staphylococcus aureus (strain NCTC 8325 / PS 47).